A 940-amino-acid chain; its full sequence is Lysine-specific demethylase 7A (940 aa).

The PHD-type zinc-finger motif lies at 37-88 (PVYCVCRQPYDVNRFMIECDVCKDWFHGSCVGVEEHHAVDIDLYHCPDCAAL). Residues 97 to 114 (RRNWHRHDYTEVDDGSKP) form a linker region. The 157-residue stretch at 230–386 (FSDTKMSELV…MQLRCYEMEK (157 aa)) folds into the JmjC domain. Thr-279 is a substrate binding site. Residues His-282 and Asp-284 each contribute to the Fe cation site. Lys-299 is a substrate binding site. His-354 contacts Fe cation. 5 disordered regions span residues 483–509 (VKSQ…HSRR), 599–670 (LYTA…PDCT), 710–729 (SQKP…TSTS), 818–854 (NAQD…SSSI), and 876–920 (SPER…MATA). Ser-604 bears the Phosphoserine mark. Over residues 613–623 (TQNANMKTEQS) the composition is skewed to polar residues. Residues 714 to 724 (SRQEIPVKREC) show a composition bias toward basic and acidic residues.

Belongs to the JHDM1 histone demethylase family. JHDM1D subfamily. Requires Fe(2+) as cofactor.

The protein localises to the nucleus. The catalysed reaction is N(6),N(6)-dimethyl-L-lysyl(9)-[histone H3] + 2 2-oxoglutarate + 2 O2 = L-lysyl(9)-[histone H3] + 2 formaldehyde + 2 succinate + 2 CO2. It catalyses the reaction N(6),N(6)-dimethyl-L-lysyl(27)-[histone H3] + 2 2-oxoglutarate + 2 O2 = L-lysyl(27)-[histone H3] + 2 formaldehyde + 2 succinate + 2 CO2. The enzyme catalyses N(6),N(6)-dimethyl-L-lysyl(36)-[histone H3] + 2-oxoglutarate + O2 = N(6)-methyl-L-lysyl(36)-[histone H3] + formaldehyde + succinate + CO2. It carries out the reaction N(6)-methyl-L-lysyl(20)-[histone H4] + 2-oxoglutarate + O2 = L-lysyl(20)-[histone H4] + formaldehyde + succinate + CO2. In terms of biological role, histone demethylase required for brain development. Specifically demethylates dimethylated 'Lys-9', 'Lys-27' and 'Lys-36' (H3K9me2, H3K27me2, H3K36me2, respectively) of histone H3 and monomethylated histone H4 'Lys-20' residue (H4K20Me1), thereby playing a central role in histone code. Specifically binds trimethylated 'Lys-4' of histone H3 (H3K4me3), affecting histone demethylase specificity: in presence of H3K4me3, it has no demethylase activity toward H3K9me2, while it has high activity toward H3K27me2. Demethylates H3K9me2 in absence of H3K4me3. Has activity toward H4K20Me1 only when nucleosome is used as a substrate and when not histone octamer is used as substrate. This is Lysine-specific demethylase 7A (Kdm7a) from Mus musculus (Mouse).